Consider the following 310-residue polypeptide: UDP-N-acetylenolpyruvoylglucosamine reductase (310 aa).

The 166-residue stretch at 23 to 188 folds into the FAD-binding PCMH-type domain; it reads KVGGNAEIFF…LKAVFKVNKG (166 aa). Arg168 is an active-site residue. Catalysis depends on Ser217, which acts as the Proton donor. Glu287 is a catalytic residue.

It belongs to the MurB family. The cofactor is FAD.

It is found in the cytoplasm. The catalysed reaction is UDP-N-acetyl-alpha-D-muramate + NADP(+) = UDP-N-acetyl-3-O-(1-carboxyvinyl)-alpha-D-glucosamine + NADPH + H(+). It functions in the pathway cell wall biogenesis; peptidoglycan biosynthesis. In terms of biological role, cell wall formation. The sequence is that of UDP-N-acetylenolpyruvoylglucosamine reductase from Rickettsia bellii (strain OSU 85-389).